Here is a 154-residue protein sequence, read N- to C-terminus: MIKMLQLPFNKKGQVSFDFIIAMLFLLLIFAFMGQNVLNMAKSFRDSETAEHAHAILDSFENYAIMAYSKDVTVNATFEPIGNLNYTIMLSNKSISVNSSTNIIFQPETDANGDYVSIKCNNVDNSVNTIPLNAVRISFGDFTVSKDEMEVNIR.

The propeptide occupies Met-1–Gly-13. A QXSXEXXXL motif is present at residues Gln-14–Leu-24.

Post-translationally, the N-terminus is cleaved by the prepilin peptidase EppA, which recognizes the class III signal sequence.

The protein localises to the secreted. Its subcellular location is the cell surface. It localises to the fimbrium. Functionally, minor component of the type IV-like pili. Essential for pili formation. This is Minor structural pilin EpdC from Methanococcus maripaludis (strain DSM 14266 / JCM 13030 / NBRC 101832 / S2 / LL).